A 224-amino-acid chain; its full sequence is Pre-hexon-linking protein VIII (224 aa).

Thr64 carries the phosphothreonine; by host modification. Positions 112–154 (RQLCPSQIGIKSPVLAGTGIQLSEDIPSASWIRPDGIFQLGGG) are excised as a propeptide.

This sequence belongs to the adenoviridae hexon-linking protein family. In terms of assembly, interacts with the peripentonal hexons as well as the hexons in the facets. Part of a complex composed of the core-capsid bridging protein, the endosome lysis protein VI and the hexon-linking protein VIII; these interactions bridge the virus core to the capsid. Cleaved by the viral protease during virion maturation. May cause the middle segment to be shed from the capsid.

The protein resides in the virion. The protein localises to the host nucleus. Its function is as follows. Structural component of the virion that acts as a cement protein on the capsid interior and which glue the peripentonal hexons and group-of-nine hexons together. The sequence is that of Pre-hexon-linking protein VIII from Canis lupus familiaris (Dog).